Reading from the N-terminus, the 782-residue chain is LINE-1 type transposase domain-containing protein 1 (782 aa).

Disordered regions lie at residues 1–30 (MSGV…TATS), 90–200 (QEGD…GGAG), and 338–397 (NKGT…SAEE). Composition is skewed to basic and acidic residues over residues 11–27 (LQKE…ERKT) and 95–107 (ISER…KVEE). Ser-136 is modified (phosphoserine). Composition is skewed to basic and acidic residues over residues 143 to 158 (SLER…HGRC) and 183 to 194 (EENRLKAPKESP). A compositionally biased stretch (acidic residues) spans 347-396 (GEEEEISETQGEETSEGETSELGEEEGSESEEEEESSESEEEEESSESAE). 7 positions are modified to phosphoserine: Ser-407, Ser-409, Ser-442, Ser-478, Ser-490, Ser-559, and Ser-567.

This sequence belongs to the transposase 22 family.

In Mus musculus (Mouse), this protein is LINE-1 type transposase domain-containing protein 1 (L1td1).